Reading from the N-terminus, the 88-residue chain is Large ribosomal subunit protein bL31B (88 aa).

It belongs to the bacterial ribosomal protein bL31 family. Type B subfamily. In terms of assembly, part of the 50S ribosomal subunit.

This is Large ribosomal subunit protein bL31B from Leuconostoc mesenteroides subsp. mesenteroides (strain ATCC 8293 / DSM 20343 / BCRC 11652 / CCM 1803 / JCM 6124 / NCDO 523 / NBRC 100496 / NCIMB 8023 / NCTC 12954 / NRRL B-1118 / 37Y).